Consider the following 405-residue polypeptide: L-rhamnonate dehydratase (405 aa).

His-33 and Arg-59 together coordinate substrate. 3 residues coordinate Mg(2+): Asp-226, Glu-252, and Glu-280. His-329 acts as the Proton acceptor in catalysis. Glu-349 serves as a coordination point for substrate.

This sequence belongs to the mandelate racemase/muconate lactonizing enzyme family. RhamD subfamily. Homooctamer; tetramer of dimers. It depends on Mg(2+) as a cofactor.

It carries out the reaction L-rhamnonate = 2-dehydro-3-deoxy-L-rhamnonate + H2O. Its function is as follows. Catalyzes the dehydration of L-rhamnonate to 2-keto-3-deoxy-L-rhamnonate (KDR). This chain is L-rhamnonate dehydratase, found in Escherichia coli (strain SMS-3-5 / SECEC).